Consider the following 194-residue polypeptide: Troponin I 4 (194 aa).

Residues 1–27 form a disordered region; sequence MSDVDADEARKMAERERKKEEVRKRLE. The span at 7–27 shows a compositional bias: basic and acidic residues; that stretch reads DEARKMAERERKKEEVRKRLE.

This sequence belongs to the troponin I family. As to expression, expression is detected only in pharyngeal muscle cells from embryos to adults.

Functionally, troponin I is the inhibitory subunit of troponin, the thin filament regulatory complex which confers calcium-sensitivity to muscle actomyosin ATPase activity. The polypeptide is Troponin I 4 (tni-4) (Caenorhabditis elegans).